The following is a 72-amino-acid chain: Cell division protein ZapB (72 aa).

Positions 2-72 (SLEILDQLEG…RSLLGQIDNV (71 aa)) form a coiled coil. The segment at 34-57 (NQQAQQANDELRSENEQLKGEHNN) is disordered. The segment covering 42-57 (DELRSENEQLKGEHNN) has biased composition (basic and acidic residues).

Belongs to the ZapB family. Homodimer. The ends of the coiled-coil dimer bind to each other, forming polymers. Interacts with FtsZ.

The protein localises to the cytoplasm. Its function is as follows. Non-essential, abundant cell division factor that is required for proper Z-ring formation. It is recruited early to the divisome by direct interaction with FtsZ, stimulating Z-ring assembly and thereby promoting cell division earlier in the cell cycle. Its recruitment to the Z-ring requires functional FtsA or ZipA. The protein is Cell division protein ZapB of Mannheimia succiniciproducens (strain KCTC 0769BP / MBEL55E).